Here is a 142-residue protein sequence, read N- to C-terminus: Type 3 secretion system pilotin (142 aa).

The signal sequence occupies residues Met1–Gly23. The N-palmitoyl cysteine moiety is linked to residue Cys24. Cys24 is lipidated: S-diacylglycerol cysteine.

Belongs to the MxiM family. As to quaternary structure, monomer. Interacts with the secretin MxiD/SctC.

It localises to the cell outer membrane. Its function is as follows. Involved in the synthesis of the type III secretion system (T3SS), also called injectisome, which is used to inject bacterial effector proteins into eukaryotic host cells. Pilot protein that is required for the proper localization of the secretin MxiD/SctC in the outer membrane. Also influences both MxiD/SctC multimerization and stability. Required for both Ipa translocation and tissue culture cell invasion. Binds lipids. The protein is Type 3 secretion system pilotin of Shigella flexneri.